Reading from the N-terminus, the 275-residue chain is Methylesterase 10 (275 aa).

S96 acts as the Acyl-ester intermediate in catalysis. Catalysis depends on charge relay system residues D225 and H253.

It belongs to the AB hydrolase superfamily. Methylesterase family.

It catalyses the reaction methyl (-)-jasmonate + H2O = jasmonate + methanol + H(+). The protein operates within plant hormone biosynthesis. It participates in lipid metabolism; oxylipin biosynthesis. Methylesterase shown to have methyl jasmonate (MeJA) esterase activity in vitro. The sequence is that of Methylesterase 10 from Arabidopsis thaliana (Mouse-ear cress).